We begin with the raw amino-acid sequence, 372 residues long: Probable dual-specificity RNA methyltransferase RlmN (372 aa).

Catalysis depends on glutamate 106, which acts as the Proton acceptor. The Radical SAM core domain maps to 112–359; that stretch reads YPQRNTVCIS…SCTVRDTRGR (248 aa). The cysteines at positions 119 and 365 are disulfide-linked. [4Fe-4S] cluster-binding residues include cysteine 126, cysteine 130, and cysteine 133. S-adenosyl-L-methionine is bound by residues 186–187, serine 220, 243–245, and asparagine 322; these read GE and SLH. Cysteine 365 functions as the S-methylcysteine intermediate in the catalytic mechanism.

This sequence belongs to the radical SAM superfamily. RlmN family. Requires [4Fe-4S] cluster as cofactor.

It localises to the cytoplasm. The enzyme catalyses adenosine(2503) in 23S rRNA + 2 reduced [2Fe-2S]-[ferredoxin] + 2 S-adenosyl-L-methionine = 2-methyladenosine(2503) in 23S rRNA + 5'-deoxyadenosine + L-methionine + 2 oxidized [2Fe-2S]-[ferredoxin] + S-adenosyl-L-homocysteine. It carries out the reaction adenosine(37) in tRNA + 2 reduced [2Fe-2S]-[ferredoxin] + 2 S-adenosyl-L-methionine = 2-methyladenosine(37) in tRNA + 5'-deoxyadenosine + L-methionine + 2 oxidized [2Fe-2S]-[ferredoxin] + S-adenosyl-L-homocysteine. Specifically methylates position 2 of adenine 2503 in 23S rRNA and position 2 of adenine 37 in tRNAs. This chain is Probable dual-specificity RNA methyltransferase RlmN, found in Mycolicibacterium smegmatis (strain ATCC 700084 / mc(2)155) (Mycobacterium smegmatis).